The chain runs to 282 residues: 4-diphosphocytidyl-2-C-methyl-D-erythritol kinase (282 aa).

Residue Lys13 is part of the active site. Residue 96–106 participates in ATP binding; the sequence is PMGGGIGGGSS. The active site involves Asp138.

The protein belongs to the GHMP kinase family. IspE subfamily.

The enzyme catalyses 4-CDP-2-C-methyl-D-erythritol + ATP = 4-CDP-2-C-methyl-D-erythritol 2-phosphate + ADP + H(+). Its pathway is isoprenoid biosynthesis; isopentenyl diphosphate biosynthesis via DXP pathway; isopentenyl diphosphate from 1-deoxy-D-xylulose 5-phosphate: step 3/6. In terms of biological role, catalyzes the phosphorylation of the position 2 hydroxy group of 4-diphosphocytidyl-2C-methyl-D-erythritol. This Pseudomonas syringae pv. tomato (strain ATCC BAA-871 / DC3000) protein is 4-diphosphocytidyl-2-C-methyl-D-erythritol kinase.